Consider the following 62-residue polypeptide: Large ribosomal subunit protein bL28 (62 aa).

This sequence belongs to the bacterial ribosomal protein bL28 family.

The polypeptide is Large ribosomal subunit protein bL28 (Koribacter versatilis (strain Ellin345)).